We begin with the raw amino-acid sequence, 611 residues long: Leukotriene A-4 hydrolase (611 aa).

At K73 the chain carries N6-acetyllysine. Residues 135-137 and 267-272 each bind a peptide; these read QCQ and PYGGME. Residue H296 coordinates Zn(2+). The Proton acceptor role is filled by E297. Zn(2+) is bound by residues H300 and E319. K337 carries the post-translational modification N6-acetyllysine. Y384 (proton donor) is an active-site residue. Position 416 is a phosphoserine (S416). 564–566 is an a peptide binding site; the sequence is RMK. K573 is subject to N6-acetyllysine.

Belongs to the peptidase M1 family. Zn(2+) is required as a cofactor. Phosphorylation at Ser-416 inhibits enzymatic activity.

It localises to the cytoplasm. It catalyses the reaction leukotriene A4 + H2O = leukotriene B4. The protein operates within lipid metabolism; leukotriene B4 biosynthesis. With respect to regulation, inhibited by bestatin. Subject to suicide inhibition by leukotriene A4. In terms of biological role, epoxide hydrolase that catalyzes the final step in the biosynthesis of the pro-inflammatory mediator leukotriene B4. Also has aminopeptidase activity. In Chinchilla lanigera (Long-tailed chinchilla), this protein is Leukotriene A-4 hydrolase (LTA4H).